The sequence spans 121 residues: Holin-like protein CidA (121 aa).

4 consecutive transmembrane segments (helical) span residues 3–23, 30–50, 58–78, and 89–109; these read WWKL…GEWI, PVPG…FNLV, GADF…VAVI, and IDLI…TGLL.

Belongs to the CidA/LrgA family. CidA subfamily.

It is found in the cell membrane. Its function is as follows. Increases the activity of extracellular murein hydrolases possibly by mediating their export via hole formation. Inhibited by the antiholin-like proteins LrgAB. In an unstressed cell, the LrgAB products probably inhibit the function of the CidA protein. When a cell is stressed by the addition of antibiotics or by other factors in the environment, CidA possibly oligomerizes within the bacterial cell membrane, creating lesions that disrupt the proton motive force, which in turn results in loss of cell viability. These lesions are also hypothesized to regulate the subsequent cell lysis by either allowing the murein hydrolases access to the cell wall substrate and/or regulating their activity by a possible change in the cell wall pH that results from loss of membrane potential. The polypeptide is Holin-like protein CidA (Bacillus cereus (strain ATCC 10987 / NRS 248)).